The sequence spans 1500 residues: ABC transporter G family member 42 (1500 aa).

The interval 26 to 56 (VDEAFMPQNSGGGGGSRGRRRSGRGGTADDD) is disordered. One can recognise an ABC transporter 1 domain in the interval 182–455 (LGLVGVRPGR…FESCGFRCPE (274 aa)). 215–222 (GPPSSGKT) is a binding site for ATP. Positions 533–746 (ELLKASFAKE…GYNALAVNEF (214 aa)) constitute an ABC transmembrane type-2 1 domain. 7 helical membrane passes run 551-571 (FVYI…STVF), 584-604 (GFVY…NGFA), 639-659 (IPFS…TIGF), 670-690 (LLLV…TAGL), 695-715 (IIAQ…GGFL), 724-744 (WWIW…LAVN), and 783-803 (FWIG…LFTL). Positions 822-834 (TAKEAEGNGDARH) are enriched in basic and acidic residues. Residues 822-850 (TAKEAEGNGDARHTVRNGSTKSNGGNHKE) are disordered. Polar residues predominate over residues 837-846 (RNGSTKSNGG). The region spanning 894–1151 (MSFDDVNYYV…KMIEYFEAIP (258 aa)) is the ABC transporter 2 domain. 939–946 (GVSGAGKT) contacts ATP. Residues 1224 to 1438 (GQFRACLWKQ…TVYGLIVTQY (215 aa)) form the ABC transmembrane type-2 2 domain. 7 helical membrane passes run 1245 to 1265 (LVRF…FWKI), 1277 to 1297 (MVIG…CATV), 1331 to 1351 (IPYV…MMSF), 1358 to 1378 (FFWF…YGMM), 1388 to 1408 (VAAI…GFFI), 1416 to 1436 (WWIW…LIVT), and 1472 to 1492 (VVAP…AICI).

This sequence belongs to the ABC transporter superfamily. ABCG family. PDR (TC 3.A.1.205) subfamily.

It localises to the membrane. Functionally, may be a general defense protein. The sequence is that of ABC transporter G family member 42 from Oryza sativa subsp. japonica (Rice).